A 283-amino-acid polypeptide reads, in one-letter code: Release factor glutamine methyltransferase (283 aa).

Residues 121–125 (GTGSG), D144, and N188 each bind S-adenosyl-L-methionine. 188–191 (NPPY) contributes to the substrate binding site.

It belongs to the protein N5-glutamine methyltransferase family. PrmC subfamily.

It carries out the reaction L-glutaminyl-[peptide chain release factor] + S-adenosyl-L-methionine = N(5)-methyl-L-glutaminyl-[peptide chain release factor] + S-adenosyl-L-homocysteine + H(+). Functionally, methylates the class 1 translation termination release factors RF1/PrfA and RF2/PrfB on the glutamine residue of the universally conserved GGQ motif. This chain is Release factor glutamine methyltransferase, found in Bacillus anthracis.